Here is a 266-residue protein sequence, read N- to C-terminus: 22 kDa alpha-zein 8 (266 aa).

Residues 1-21 (MATKILALLALLALFVSATNA) form the signal peptide.

Belongs to the zein family.

Zeins are major seed storage proteins. The polypeptide is 22 kDa alpha-zein 8 (Zea mays (Maize)).